A 514-amino-acid polypeptide reads, in one-letter code: Cardiolipin synthase 2 (514 aa).

The next 3 helical transmembrane spans lie at 7–27, 41–61, and 71–91; these read LIFF…FIDV, ILGI…CVIF, and LTWL…YLLF. PLD phosphodiesterase domains are found at residues 249 to 276 and 427 to 454; these read INYR…GDEY and EKGF…DMRS. Residues histidine 254, lysine 256, aspartate 261, histidine 432, lysine 434, and aspartate 439 contribute to the active site.

The protein belongs to the phospholipase D family. Cardiolipin synthase subfamily.

The protein resides in the cell membrane. The enzyme catalyses 2 a 1,2-diacyl-sn-glycero-3-phospho-(1'-sn-glycerol) = a cardiolipin + glycerol. Catalyzes the reversible phosphatidyl group transfer from one phosphatidylglycerol molecule to another to form cardiolipin (CL) (diphosphatidylglycerol) and glycerol. The polypeptide is Cardiolipin synthase 2 (cls2) (Bacillus cereus (strain ATCC 14579 / DSM 31 / CCUG 7414 / JCM 2152 / NBRC 15305 / NCIMB 9373 / NCTC 2599 / NRRL B-3711)).